A 381-amino-acid polypeptide reads, in one-letter code: Homoserine O-succinyltransferase (381 aa).

Residues 45–360 (NAVLVCHALN…PHGHDAFLLD (316 aa)) form the AB hydrolase-1 domain. The active-site Nucleophile is Ser151. Residue Arg221 coordinates substrate. Catalysis depends on residues Asp321 and His354. Residue Asp355 coordinates substrate.

It belongs to the AB hydrolase superfamily. MetX family. As to quaternary structure, homodimer.

It localises to the cytoplasm. It catalyses the reaction L-homoserine + succinyl-CoA = O-succinyl-L-homoserine + CoA. It functions in the pathway amino-acid biosynthesis; L-methionine biosynthesis via de novo pathway; O-succinyl-L-homoserine from L-homoserine: step 1/1. Functionally, transfers a succinyl group from succinyl-CoA to L-homoserine, forming succinyl-L-homoserine. The protein is Homoserine O-succinyltransferase of Burkholderia lata (strain ATCC 17760 / DSM 23089 / LMG 22485 / NCIMB 9086 / R18194 / 383).